The sequence spans 91 residues: Small ribosomal subunit protein bS18 (91 aa).

Positions 1 to 14 (MTNQNQSQTQTTQT) are enriched in low complexity. Residues 1-24 (MTNQNQSQTQTTQTVEKVSSRQKK) form a disordered region.

It belongs to the bacterial ribosomal protein bS18 family. In terms of assembly, part of the 30S ribosomal subunit. Forms a tight heterodimer with protein bS6.

In terms of biological role, binds as a heterodimer with protein bS6 to the central domain of the 16S rRNA, where it helps stabilize the platform of the 30S subunit. The protein is Small ribosomal subunit protein bS18 of Caldicellulosiruptor saccharolyticus (strain ATCC 43494 / DSM 8903 / Tp8T 6331).